A 448-amino-acid polypeptide reads, in one-letter code: Gamete and mating-type specific protein A (448 aa).

The first 19 residues, 1–19 (MKLILVLLCLISTLFVVKG), serve as a signal peptide directing secretion. The SCP domain occupies 30–157 (VSYHNKWRSS…PDKSEVSCSY (128 aa)). Residues asparagine 55, asparagine 98, and asparagine 119 are each glycosylated (N-linked (GlcNAc...) asparagine). A disordered region spans residues 171–242 (PKTTTPAPTT…PTTPAPTSTL (72 aa)). Positions 178-236 (PTTPAPTTPKPTTPAPTTPKPTTPAPTTPKPTTPAPTTPKPTTPAPTTPKPTTPAPTTP) are enriched in pro residues. Catalysis depends on residues cysteine 262, histidine 397, and asparagine 415.

The protein belongs to the peptidase C1 family.

The protein resides in the secreted. Functionally, thiol protease that seems to be involved in the sexual development. The protein is Gamete and mating-type specific protein A (gmsA) of Dictyostelium discoideum (Social amoeba).